A 73-amino-acid polypeptide reads, in one-letter code: Defensin-like protein 10 (73 aa).

An N-terminal signal peptide occupies residues 1–28 (MKLSLRLISALLMSVMLLFATGMGPVEA). Cystine bridges form between Cys-31/Cys-73, Cys-42/Cys-62, Cys-48/Cys-67, and Cys-52/Cys-69.

This sequence belongs to the DEFL family.

The protein localises to the secreted. Functionally, confers broad-spectrum resistance to pathogens. This Arabidopsis thaliana (Mouse-ear cress) protein is Defensin-like protein 10 (PDF2.6).